The chain runs to 302 residues: MSTVPEISSAPFGRLLTAMVTPFDTAGAVDFALAARLARYLVDQGSDGLIVCGTTGESPTLSWEEQYQLLETVRNAVNGSAKVLAGTGSNSTSEAIHATAKAAEAGADGALVVVPYYNKPPQAGLESHFRAVAQAAPDLPLMLYNIPGRTGCSISPITVQRLMNCSNIVSFKAASGTTNEVTDLRIRCGSRLAIYSGDDGLLLPMLSVGAVGVVSVASHIVGMRLKAMIEAYFAGENSLALSHHEQLQPLFKALFATTNPIPVKAALELIGWPVGAPRSPLLPLENQMKNELMKTISALLQT.

Thr-55 is a pyruvate binding site. The Proton donor/acceptor role is filled by Tyr-144. Lys-172 (schiff-base intermediate with substrate) is an active-site residue. Val-214 serves as a coordination point for pyruvate.

This sequence belongs to the DapA family. In terms of assembly, homotetramer; dimer of dimers.

The protein resides in the cytoplasm. The enzyme catalyses L-aspartate 4-semialdehyde + pyruvate = (2S,4S)-4-hydroxy-2,3,4,5-tetrahydrodipicolinate + H2O + H(+). It functions in the pathway amino-acid biosynthesis; L-lysine biosynthesis via DAP pathway; (S)-tetrahydrodipicolinate from L-aspartate: step 3/4. In terms of biological role, catalyzes the condensation of (S)-aspartate-beta-semialdehyde [(S)-ASA] and pyruvate to 4-hydroxy-tetrahydrodipicolinate (HTPA). This Prochlorococcus marinus (strain SARG / CCMP1375 / SS120) protein is 4-hydroxy-tetrahydrodipicolinate synthase.